Here is a 278-residue protein sequence, read N- to C-terminus: Thiazole synthase (278 aa).

The active-site Schiff-base intermediate with DXP is the Lys109. Residues Gly170, 197 to 198, and 219 to 220 each bind 1-deoxy-D-xylulose 5-phosphate; these read AG and NT.

It belongs to the ThiG family. In terms of assembly, homotetramer. Forms heterodimers with either ThiH or ThiS.

The protein localises to the cytoplasm. The enzyme catalyses [ThiS sulfur-carrier protein]-C-terminal-Gly-aminoethanethioate + 2-iminoacetate + 1-deoxy-D-xylulose 5-phosphate = [ThiS sulfur-carrier protein]-C-terminal Gly-Gly + 2-[(2R,5Z)-2-carboxy-4-methylthiazol-5(2H)-ylidene]ethyl phosphate + 2 H2O + H(+). It functions in the pathway cofactor biosynthesis; thiamine diphosphate biosynthesis. Functionally, catalyzes the rearrangement of 1-deoxy-D-xylulose 5-phosphate (DXP) to produce the thiazole phosphate moiety of thiamine. Sulfur is provided by the thiocarboxylate moiety of the carrier protein ThiS. In vitro, sulfur can be provided by H(2)S. The polypeptide is Thiazole synthase (Cupriavidus necator (strain ATCC 17699 / DSM 428 / KCTC 22496 / NCIMB 10442 / H16 / Stanier 337) (Ralstonia eutropha)).